The primary structure comprises 227 residues: Cytochrome c oxidase subunit 2 (227 aa).

Over 1–14 (MAYPFQLGLQDATS) the chain is Mitochondrial intermembrane. Residues 15 to 45 (PIMEELMNFHDHTLMIVFLISSLVLYIISLM) traverse the membrane as a helical segment. Over 46-59 (LTTKLTHTSTMDAQ) the chain is Mitochondrial matrix. The helical transmembrane segment at 60–87 (EVETIWTILPAAILILIALPSLRILYMM) threads the bilayer. The Mitochondrial intermembrane segment spans residues 88–227 (DEINNPVLTV…YFENWSASMI (140 aa)). Cu cation-binding residues include H161, C196, E198, C200, H204, and M207. Residue E198 coordinates Mg(2+). Y218 carries the phosphotyrosine modification.

This sequence belongs to the cytochrome c oxidase subunit 2 family. In terms of assembly, component of the cytochrome c oxidase (complex IV, CIV), a multisubunit enzyme composed of 14 subunits. The complex is composed of a catalytic core of 3 subunits MT-CO1, MT-CO2 and MT-CO3, encoded in the mitochondrial DNA, and 11 supernumerary subunits COX4I, COX5A, COX5B, COX6A, COX6B, COX6C, COX7A, COX7B, COX7C, COX8 and NDUFA4, which are encoded in the nuclear genome. The complex exists as a monomer or a dimer and forms supercomplexes (SCs) in the inner mitochondrial membrane with NADH-ubiquinone oxidoreductase (complex I, CI) and ubiquinol-cytochrome c oxidoreductase (cytochrome b-c1 complex, complex III, CIII), resulting in different assemblies (supercomplex SCI(1)III(2)IV(1) and megacomplex MCI(2)III(2)IV(2)). Found in a complex with TMEM177, COA6, COX18, COX20, SCO1 and SCO2. Interacts with TMEM177 in a COX20-dependent manner. Interacts with COX20. Interacts with COX16. Cu cation is required as a cofactor.

It localises to the mitochondrion inner membrane. The enzyme catalyses 4 Fe(II)-[cytochrome c] + O2 + 8 H(+)(in) = 4 Fe(III)-[cytochrome c] + 2 H2O + 4 H(+)(out). Component of the cytochrome c oxidase, the last enzyme in the mitochondrial electron transport chain which drives oxidative phosphorylation. The respiratory chain contains 3 multisubunit complexes succinate dehydrogenase (complex II, CII), ubiquinol-cytochrome c oxidoreductase (cytochrome b-c1 complex, complex III, CIII) and cytochrome c oxidase (complex IV, CIV), that cooperate to transfer electrons derived from NADH and succinate to molecular oxygen, creating an electrochemical gradient over the inner membrane that drives transmembrane transport and the ATP synthase. Cytochrome c oxidase is the component of the respiratory chain that catalyzes the reduction of oxygen to water. Electrons originating from reduced cytochrome c in the intermembrane space (IMS) are transferred via the dinuclear copper A center (CU(A)) of subunit 2 and heme A of subunit 1 to the active site in subunit 1, a binuclear center (BNC) formed by heme A3 and copper B (CU(B)). The BNC reduces molecular oxygen to 2 water molecules using 4 electrons from cytochrome c in the IMS and 4 protons from the mitochondrial matrix. The protein is Cytochrome c oxidase subunit 2 (MT-CO2) of Praomys tullbergi (Tullberg's soft-furred rat).